A 378-amino-acid polypeptide reads, in one-letter code: Poly(3-hydroxyalkanoate) polymerase subunit PhaC (378 aa).

The 273-residue stretch at 84–356 (PVLIVYALVN…QSFPVGHIGM (273 aa)) folds into the AB hydrolase-1 domain.

It belongs to the PHA/PHB synthase family. Type III PhaC subfamily. In terms of assembly, forms a heterodimer with PhaE, which may multimerize in the presence of 3-hydroxybutyryl-CoA. Both subunits are required for PHB synthesis in E.coli and in PHA-negative A.eutrophus.

Its subcellular location is the cytoplasm. The enzyme catalyses (3R)-3-hydroxybutanoyl-CoA + [(3R)-hydroxybutanoate](n) = [(3R)-hydroxybutanoate](n+1) + CoA. It participates in biopolymer metabolism; poly-(R)-3-hydroxybutanoate biosynthesis. Functionally, when expressed in E.coli with Synechocystis PhaE and C.necator PhaA and PhaB, confers the ability to synthesize up to 13% (w/w) poly(3-hydroxybutyrate) (PHB) depending on the carbon source; all 4 genes are necessary for PHB production. Cell-free in vitro coexpression with PhaE gives a heterodimer able to polymerize 3-hydroxybutyrate-CoA. This Synechocystis sp. (strain ATCC 27184 / PCC 6803 / Kazusa) protein is Poly(3-hydroxyalkanoate) polymerase subunit PhaC.